Consider the following 317-residue polypeptide: tRNA dimethylallyltransferase (317 aa).

14–21 (GPTASGKS) is a binding site for ATP. 16–21 (TASGKS) contributes to the substrate binding site. Interaction with substrate tRNA regions lie at residues 39-42 (DSVL) and 163-167 (QRIQR).

It belongs to the IPP transferase family. As to quaternary structure, monomer. The cofactor is Mg(2+).

The catalysed reaction is adenosine(37) in tRNA + dimethylallyl diphosphate = N(6)-dimethylallyladenosine(37) in tRNA + diphosphate. Catalyzes the transfer of a dimethylallyl group onto the adenine at position 37 in tRNAs that read codons beginning with uridine, leading to the formation of N6-(dimethylallyl)adenosine (i(6)A). This Xylella fastidiosa (strain 9a5c) protein is tRNA dimethylallyltransferase.